The following is a 540-amino-acid chain: Chaperonin GroEL 1 (540 aa).

Residues 29 to 32 (TIGP), 86 to 90 (DGTTT), Gly415, 479 to 481 (NAA), and Asp495 contribute to the ATP site.

It belongs to the chaperonin (HSP60) family. As to quaternary structure, forms a cylinder of 14 subunits composed of two heptameric rings stacked back-to-back. Interacts with the co-chaperonin GroES.

Its subcellular location is the cytoplasm. The enzyme catalyses ATP + H2O + a folded polypeptide = ADP + phosphate + an unfolded polypeptide.. Its function is as follows. Together with its co-chaperonin GroES, plays an essential role in assisting protein folding. The GroEL-GroES system forms a nano-cage that allows encapsulation of the non-native substrate proteins and provides a physical environment optimized to promote and accelerate protein folding. In Streptomyces albus G, this protein is Chaperonin GroEL 1.